The following is a 474-amino-acid chain: MPMVLLECDKDIPERQKHIYLKAPNEDTREFLPIANAATIPGTLSERGCAFCGAKLVIGGVLKDTIQMIHGPLGCAYDTWHTKRYPTDNGHFNMKYVWSTDMKESHVVFGGEKRLEKSMHEAFDEMPDIKRMIVYTTCPTALIGDDIKAVAKKVMKDRPDVDVFTVECPGFSGVSQSKGHHVLNIGWINEKVETMEKEITSEYTMNFIGDFNIQGDTQLLQTYWDRLGIQVVAHFTGNGTYDDLRCMHQAQLNVVNCARSSGYIANELKKRYGIPRLDIDSWGFNYMAEGIRKICAFFGIEEKGEELIAEEYAKWKPKLDWYKERLQGKKMAIWTGGPRLWHWTKSVEDDLGVQVVAMSSKFGHEEDFEKVIARGKEGTYYIDDGNELEFFEIIDLVKPDVIFTGPRVGELVKKLHIPYVNGHGYHNGPYMGFEGFVNLARDMYNAVHNPLRHLAAVDIRDKSQTTPVIVRGAA.

[8Fe-7S] cluster contacts are provided by Cys-49, Cys-75, and Cys-138. [7Fe-V-9S-C-homocitryl] cluster contacts are provided by Cys-257 and His-423.

This sequence belongs to the NifD/NifK/NifE/NifN family. Hexamer of two alpha, two beta, and two delta chains. [8Fe-7S] cluster is required as a cofactor. The cofactor is [7Fe-V-9S-C-homocitryl] cluster.

The catalysed reaction is N2 + 8 reduced [2Fe-2S]-[ferredoxin] + 16 ATP + 16 H2O = H2 + 8 oxidized [2Fe-2S]-[ferredoxin] + 2 NH4(+) + 16 ADP + 16 phosphate + 6 H(+). This vanadium-iron protein is part of the nitrogenase complex that catalyzes the key enzymatic reactions in nitrogen fixation. This Azotobacter vinelandii protein is Nitrogenase vanadium-iron protein alpha chain (vnfD).